The primary structure comprises 314 residues: Homoserine O-acetyltransferase (314 aa).

Catalysis depends on C142, which acts as the Acyl-thioester intermediate. K163 and S192 together coordinate substrate. Catalysis depends on H235, which acts as the Proton acceptor. Residue E237 is part of the active site. R249 contributes to the substrate binding site.

This sequence belongs to the MetA family.

It is found in the cytoplasm. It carries out the reaction L-homoserine + acetyl-CoA = O-acetyl-L-homoserine + CoA. It participates in amino-acid biosynthesis; L-methionine biosynthesis via de novo pathway; O-acetyl-L-homoserine from L-homoserine: step 1/1. Transfers an acetyl group from acetyl-CoA to L-homoserine, forming acetyl-L-homoserine. The protein is Homoserine O-acetyltransferase of Desulfovibrio desulfuricans (strain ATCC 27774 / DSM 6949 / MB).